The primary structure comprises 63 residues: Metallothionein-1 (63 aa).

2 consecutive repeats follow at residues 23–30 and 56–63; these read CGDKCECK.

The protein belongs to the metallothionein superfamily. Type 9 family.

Its function is as follows. The metallothioneins are involved in the cellular sequestration of toxic metal ions. The protein is Metallothionein-1 (MT-I) of Candida glabrata (strain ATCC 2001 / BCRC 20586 / JCM 3761 / NBRC 0622 / NRRL Y-65 / CBS 138) (Yeast).